A 217-amino-acid polypeptide reads, in one-letter code: Probable rhamnogalacturonan acetylesterase YesY (217 aa).

The active-site Nucleophile is S11. Catalysis depends on residues E178 and H185.

Belongs to the 'GDSL' lipolytic enzyme family.

Functionally, may play a role in the degradation of rhamnogalacturonan derived from plant cell walls. Probably has broad substrate specificity and may degrade several types of acetylated substrates. The chain is Probable rhamnogalacturonan acetylesterase YesY (yesY) from Bacillus subtilis (strain 168).